A 556-amino-acid chain; its full sequence is CBS domain-containing protein CBSCBSPB3 (556 aa).

Polar residues-rich tracts occupy residues methionine 1–valine 20 and proline 30–lysine 44. Positions methionine 1–threonine 63 are disordered. Position 2 is an N-acetylserine (serine 2). CBS domains follow at residues arginine 68–glutamine 127, methionine 134–lysine 189, isoleucine 235–glutamate 294, and methionine 302–serine 360. One can recognise a PB1 domain in the interval glycine 414–threonine 502. The helical transmembrane segment at tryptophan 527–valine 549 threads the bilayer.

It is found in the membrane. This is CBS domain-containing protein CBSCBSPB3 (CBSCBSPB3) from Arabidopsis thaliana (Mouse-ear cress).